We begin with the raw amino-acid sequence, 1964 residues long: Probable helicase with zinc finger domain (1964 aa).

A C3H1-type zinc finger spans residues 178-206 (SEEYTLCKRFLEQGICRYGAQCTSAHSQE). At Ser-248 the chain carries Phosphoserine. 668-675 (GPYGTGKT) contacts ATP. Residues 794–797 (DEAA) carry the DEAA box motif. Residues 1116-1127 (HSGNSSRQQQSP) are compositionally biased toward polar residues. The segment at 1116-1135 (HSGNSSRQQQSPPKVKSLYH) is disordered. A Phosphothreonine modification is found at Thr-1163. Omega-N-methylarginine is present on Arg-1245. Disordered regions lie at residues 1248–1350 (PIPY…LPAP), 1360–1379 (HFHP…QPHT), 1388–1449 (LPEQ…QAGP), 1463–1491 (QSPA…RAIT), 1631–1655 (QVQP…QFAN), and 1743–1964 (QHAA…SYFK). Basic and acidic residues-rich tracts occupy residues 1268-1281 (HAEK…RNGK) and 1292-1308 (NKIR…KQVD). Pro residues predominate over residues 1365–1374 (PQLPRPPFPA). A compositionally biased stretch (low complexity) spans 1388 to 1431 (LPEQPNQMAPQPNQVAPQPNQMTPQPNQVAPQPNQVVQQQSQAP). Positions 1635–1644 (RSPPAVPSPP) are enriched in pro residues. A phosphoserine mark is found at Ser-1636, Ser-1760, Ser-1763, and Ser-1788. Over residues 1755 to 1765 (SSRTVSASSLP) the composition is skewed to polar residues. 2 stretches are compositionally biased toward polar residues: residues 1799–1813 (PQDS…QGHS) and 1826–1849 (WANT…TSQP). The span at 1860–1870 (KPPEDQLKPES) shows a compositional bias: basic and acidic residues. 2 stretches are compositionally biased toward polar residues: residues 1872 to 1881 (EVSSSFNYSM) and 1897 to 1910 (IAES…QSPA). Residues 1941–1956 (PLSLLQELSLGSSPGS) are compositionally biased toward low complexity.

It belongs to the DNA2/NAM7 helicase family. Interacts with POLR2A. Interacts with SMYD3; the interaction may bridge SMYD3 and RNA polymerase II. Interacts with SMYD2.

It localises to the nucleus. May act as a helicase that plays a role in RNA metabolism in multiple tissues and organs within the developing embryo. This chain is Probable helicase with zinc finger domain (Helz), found in Mus musculus (Mouse).